The primary structure comprises 1068 residues: Phosphatidylinositol 4,5-bisphosphate 3-kinase catalytic subunit alpha isoform (1068 aa).

In terms of domain architecture, PI3K-ABD spans 16-105 (MPPRILVECL…QPFLKVIEPV (90 aa)). The PI3K-RBD domain occupies 187-289 (KGQIIVVIWV…GRMPNLMLMA (103 aa)). The C2 PI3K-type domain maps to 330 to 487 (INSALRIKIL…DWFSSVVKFP (158 aa)). Positions 517–694 (LARDNELREN…GLLLESYCRA (178 aa)) constitute a PIK helical domain. The PI3K/PI4K catalytic domain occupies 765–1051 (RLEECRIMSS…QMNDAHHGGW (287 aa)). The tract at residues 771 to 777 (IMSSAKR) is G-loop. Positions 912–920 (GIGDRHNSN) are catalytic loop. Residues 931 to 957 (HIDFGHFLDHKKKKFGYKRERVPFVLT) are activation loop.

This sequence belongs to the PI3/PI4-kinase family. In terms of assembly, heterodimer of a catalytic subunit PIK3CA and a p85 regulatory subunit (PIK3R1, PIK3R2 or PIK3R3). Interacts with IRS1 in nuclear extracts. Interacts with RUFY3. Interacts with RASD2. Interacts with APPL1. Interacts with HRAS and KRAS. Interaction with HRAS/KRAS is required for PI3K pathway signaling and cell proliferation stimulated by EGF and FGF2. Interacts with FAM83B; activates the PI3K/AKT signaling cascade.

It carries out the reaction a 1,2-diacyl-sn-glycero-3-phospho-(1D-myo-inositol-4,5-bisphosphate) + ATP = a 1,2-diacyl-sn-glycero-3-phospho-(1D-myo-inositol-3,4,5-trisphosphate) + ADP + H(+). It catalyses the reaction a 1,2-diacyl-sn-glycero-3-phospho-(1D-myo-inositol) + ATP = a 1,2-diacyl-sn-glycero-3-phospho-(1D-myo-inositol-3-phosphate) + ADP + H(+). The catalysed reaction is L-seryl-[protein] + ATP = O-phospho-L-seryl-[protein] + ADP + H(+). The enzyme catalyses 1,2-dioctanoyl-sn-glycero-3-phospho-(1D-myo-inositol-4,5-bisphosphate) + ATP = 1,2-dioctanoyl-sn-glycero-3-phospho-(1D-myo-inositol-3,4,5-trisphosphate) + ADP + H(+). It carries out the reaction 1-octadecanoyl-2-(5Z,8Z,11Z,14Z)-eicosatetraenoyl-sn-glycero-3-phospho-1D-myo-inositol 4,5-bisphosphate + ATP = 1-octadecanoyl-2-(5Z,8Z,11Z,14Z-eicosatetraenoyl)-sn-glycero-3-phospho-(1D-myo-inositol 3,4,5-triphosphate) + ADP + H(+). The protein operates within phospholipid metabolism; phosphatidylinositol phosphate biosynthesis. In terms of biological role, phosphoinositide-3-kinase (PI3K) phosphorylates phosphatidylinositol (PI) and its phosphorylated derivatives at position 3 of the inositol ring to produce 3-phosphoinositides. Uses ATP and PtdIns(4,5)P2 (phosphatidylinositol 4,5-bisphosphate) to generate phosphatidylinositol 3,4,5-trisphosphate (PIP3). PIP3 plays a key role by recruiting PH domain-containing proteins to the membrane, including AKT1 and PDPK1, activating signaling cascades involved in cell growth, survival, proliferation, motility and morphology. Participates in cellular signaling in response to various growth factors. Involved in the activation of AKT1 upon stimulation by receptor tyrosine kinases ligands such as EGF, insulin, IGF1, VEGFA and PDGF. Involved in signaling via insulin-receptor substrate (IRS) proteins. Essential in endothelial cell migration during vascular development through VEGFA signaling, possibly by regulating RhoA activity. Required for lymphatic vasculature development, possibly by binding to RAS and by activation by EGF and FGF2, but not by PDGF. Regulates invadopodia formation through the PDPK1-AKT1 pathway. Participates in cardiomyogenesis in embryonic stem cells through a AKT1 pathway. Participates in vasculogenesis in embryonic stem cells through PDK1 and protein kinase C pathway. Also has serine-protein kinase activity: phosphorylates PIK3R1 (p85alpha regulatory subunit), EIF4EBP1 and HRAS. Plays a role in the positive regulation of phagocytosis and pinocytosis. This is Phosphatidylinositol 4,5-bisphosphate 3-kinase catalytic subunit alpha isoform (Pik3ca) from Mus musculus (Mouse).